The following is a 534-amino-acid chain: CTP synthase (534 aa).

Residues Met1–Leu267 are amidoligase domain. Ser13 contributes to the CTP binding site. Ser13 lines the UTP pocket. Position 14–19 (Ser14–Ile19) interacts with ATP. Tyr54 serves as a coordination point for L-glutamine. Asp71 is an ATP binding site. Positions 71 and 141 each coordinate Mg(2+). CTP is bound by residues Asp148–Glu150, Lys188–Gln193, and Lys224. UTP contacts are provided by residues Lys188 to Gln193 and Lys224. Arg240–Val242 serves as a coordination point for ATP. In terms of domain architecture, Glutamine amidotransferase type-1 spans Lys292–Asn534. Gly354 serves as a coordination point for L-glutamine. Cys381 serves as the catalytic Nucleophile; for glutamine hydrolysis. L-glutamine is bound by residues Leu382–Gln385, Glu405, and Arg463. Catalysis depends on residues His508 and Glu510.

This sequence belongs to the CTP synthase family. In terms of assembly, homotetramer.

The catalysed reaction is UTP + L-glutamine + ATP + H2O = CTP + L-glutamate + ADP + phosphate + 2 H(+). It carries out the reaction L-glutamine + H2O = L-glutamate + NH4(+). The enzyme catalyses UTP + NH4(+) + ATP = CTP + ADP + phosphate + 2 H(+). It functions in the pathway pyrimidine metabolism; CTP biosynthesis via de novo pathway; CTP from UDP: step 2/2. Its activity is regulated as follows. Allosterically activated by GTP, when glutamine is the substrate; GTP has no effect on the reaction when ammonia is the substrate. The allosteric effector GTP functions by stabilizing the protein conformation that binds the tetrahedral intermediate(s) formed during glutamine hydrolysis. Inhibited by the product CTP, via allosteric rather than competitive inhibition. Functionally, catalyzes the ATP-dependent amination of UTP to CTP with either L-glutamine or ammonia as the source of nitrogen. Regulates intracellular CTP levels through interactions with the four ribonucleotide triphosphates. This Streptococcus pyogenes serotype M28 (strain MGAS6180) protein is CTP synthase.